The following is a 338-amino-acid chain: Formamidase (338 aa).

Residues L14–P260 enclose the CN hydrolase domain. E60 serves as the catalytic Proton acceptor. K133 serves as the catalytic Proton donor. C166 acts as the Nucleophile in catalysis.

The protein belongs to the carbon-nitrogen hydrolase superfamily. Aliphatic amidase family.

It carries out the reaction formamide + H2O = formate + NH4(+). Is an aliphatic amidase with a restricted substrate specificity, as it only hydrolyzes formamide. The chain is Formamidase from Photorhabdus laumondii subsp. laumondii (strain DSM 15139 / CIP 105565 / TT01) (Photorhabdus luminescens subsp. laumondii).